The primary structure comprises 318 residues: Ribose-phosphate pyrophosphokinase 3 (318 aa).

96–101 provides a ligand contact to ATP; sequence RQDKKD. Mg(2+)-binding residues include D128, H130, D139, and D143. H130 contributes to the ATP binding site. The tract at residues 212–227 is binding of phosphoribosylpyrophosphate; the sequence is NDRVAILVDDMADTCV.

Belongs to the ribose-phosphate pyrophosphokinase family. As to quaternary structure, homodimer. The active form is probably a hexamer composed of 3 homodimers. The cofactor is Mg(2+). Testis.

It carries out the reaction D-ribose 5-phosphate + ATP = 5-phospho-alpha-D-ribose 1-diphosphate + AMP + H(+). It participates in metabolic intermediate biosynthesis; 5-phospho-alpha-D-ribose 1-diphosphate biosynthesis; 5-phospho-alpha-D-ribose 1-diphosphate from D-ribose 5-phosphate (route I): step 1/1. With respect to regulation, activated by magnesium and inorganic phosphate. Catalyzes the synthesis of phosphoribosylpyrophosphate (PRPP) that is essential for nucleotide synthesis. The protein is Ribose-phosphate pyrophosphokinase 3 (PRPS1L1) of Homo sapiens (Human).